Here is a 447-residue protein sequence, read N- to C-terminus: Phosphoglucosamine mutase (447 aa).

The Phosphoserine intermediate role is filled by Ser-102. The Mg(2+) site is built by Ser-102, Asp-241, Asp-243, and Asp-245. The residue at position 102 (Ser-102) is a Phosphoserine.

The protein belongs to the phosphohexose mutase family. Requires Mg(2+) as cofactor. In terms of processing, activated by phosphorylation.

It carries out the reaction alpha-D-glucosamine 1-phosphate = D-glucosamine 6-phosphate. Catalyzes the conversion of glucosamine-6-phosphate to glucosamine-1-phosphate. This Delftia acidovorans (strain DSM 14801 / SPH-1) protein is Phosphoglucosamine mutase.